We begin with the raw amino-acid sequence, 159 residues long: Phosphoribosylaminoimidazole carboxylase (159 aa).

Substrate contacts are provided by S11, D14, S38, K41, G67, and S69.

The catalysed reaction is 5-amino-1-(5-phospho-D-ribosyl)imidazole-4-carboxylate + H(+) = 5-amino-1-(5-phospho-beta-D-ribosyl)imidazole + CO2. It participates in purine metabolism; IMP biosynthesis via de novo pathway; 5-amino-1-(5-phospho-D-ribosyl)imidazole-4-carboxylate from 5-amino-1-(5-phospho-D-ribosyl)imidazole (carboxylase route): step 1/1. In terms of biological role, catalyzes the reversible conversion of 5-aminoimidazole ribonucleotide (AIR) and CO(2) to 4-carboxy-5-aminoimidazole ribonucleotide (CAIR). Does not accept N5-carboxyaminoimidazole ribonucleotide (N5-CAIR) as a substrate. In Treponema denticola (strain ATCC 35405 / DSM 14222 / CIP 103919 / JCM 8153 / KCTC 15104), this protein is Phosphoribosylaminoimidazole carboxylase.